Consider the following 221-residue polypeptide: Urease accessory protein UreF (221 aa).

It belongs to the UreF family. As to quaternary structure, ureD, UreF and UreG form a complex that acts as a GTP-hydrolysis-dependent molecular chaperone, activating the urease apoprotein by helping to assemble the nickel containing metallocenter of UreC. The UreE protein probably delivers the nickel.

It is found in the cytoplasm. Functionally, required for maturation of urease via the functional incorporation of the urease nickel metallocenter. This is Urease accessory protein UreF from Vibrio parahaemolyticus.